The following is a 351-amino-acid chain: Anthranilate phosphoribosyltransferase (351 aa).

Residues G80, 83–84 (GD), T88, 90–93 (NIST), 108–116 (KHGNRSVTS), and S120 contribute to the 5-phospho-alpha-D-ribose 1-diphosphate site. G80 provides a ligand contact to anthranilate. Mg(2+) is bound at residue S92. N111 contributes to the anthranilate binding site. An anthranilate-binding site is contributed by R166. The Mg(2+) site is built by D229 and E230.

It belongs to the anthranilate phosphoribosyltransferase family. In terms of assembly, homodimer. Mg(2+) serves as cofactor.

The catalysed reaction is N-(5-phospho-beta-D-ribosyl)anthranilate + diphosphate = 5-phospho-alpha-D-ribose 1-diphosphate + anthranilate. Its pathway is amino-acid biosynthesis; L-tryptophan biosynthesis; L-tryptophan from chorismate: step 2/5. Catalyzes the transfer of the phosphoribosyl group of 5-phosphorylribose-1-pyrophosphate (PRPP) to anthranilate to yield N-(5'-phosphoribosyl)-anthranilate (PRA). The polypeptide is Anthranilate phosphoribosyltransferase (Chlorobium limicola (strain DSM 245 / NBRC 103803 / 6330)).